We begin with the raw amino-acid sequence, 162 residues long: MGDWLLRRRGLALLLVLTLLLNLGALGLEYLADMPPCPLCWVQRGVFGLMSLVALVGLVYFPRGWGRWPLAGALGLSALTGVIIALRHLYIQANPDAVSCGMSPEVLAQFLPWWEVLLEILSGTTDCTQVDAVLGVPLPGWTLVGYLALGALGLYAVLARRA.

Topologically, residues 1 to 10 are cytoplasmic; it reads MGDWLLRRRG. A helical membrane pass occupies residues 11 to 27; it reads LALLLVLTLLLNLGALG. Over 28–45 the chain is Periplasmic; sequence LEYLADMPPCPLCWVQRG. Residues cysteine 37 and cysteine 40 are joined by a disulfide bond. A helical membrane pass occupies residues 46-62; that stretch reads VFGLMSLVALVGLVYFP. The Cytoplasmic segment spans residues 63–68; sequence RGWGRW. Residues 69–86 traverse the membrane as a helical segment; the sequence is PLAGALGLSALTGVIIAL. Topologically, residues 87–140 are periplasmic; sequence RHLYIQANPDAVSCGMSPEVLAQFLPWWEVLLEILSGTTDCTQVDAVLGVPLPG. A disulfide bond links cysteine 100 and cysteine 127. A helical membrane pass occupies residues 141-159; the sequence is WTLVGYLALGALGLYAVLA. Topologically, residues 160 to 162 are cytoplasmic; it reads RRA.

It belongs to the DsbB family.

It is found in the cell inner membrane. Functionally, required for disulfide bond formation in some periplasmic proteins. Acts by oxidizing the DsbA protein. The chain is Disulfide bond formation protein B from Alkalilimnicola ehrlichii (strain ATCC BAA-1101 / DSM 17681 / MLHE-1).